Reading from the N-terminus, the 427-residue chain is Adenylosuccinate synthetase (427 aa).

GTP is bound by residues 12–18 (GDEGKGK) and 40–42 (GHT). Catalysis depends on Asp13, which acts as the Proton acceptor. 2 residues coordinate Mg(2+): Asp13 and Gly40. IMP is bound by residues 13 to 16 (DEGK), 38 to 41 (NAGH), Thr128, Arg142, Gln223, Thr238, and Arg302. The Proton donor role is filled by His41. Position 298 to 304 (298 to 304 (TTTGRPR)) interacts with substrate. Residues Arg304, 330 to 332 (SID), and 412 to 414 (SVG) contribute to the GTP site.

This sequence belongs to the adenylosuccinate synthetase family. In terms of assembly, homodimer. The cofactor is Mg(2+).

It localises to the cytoplasm. It carries out the reaction IMP + L-aspartate + GTP = N(6)-(1,2-dicarboxyethyl)-AMP + GDP + phosphate + 2 H(+). It functions in the pathway purine metabolism; AMP biosynthesis via de novo pathway; AMP from IMP: step 1/2. In terms of biological role, plays an important role in the de novo pathway of purine nucleotide biosynthesis. Catalyzes the first committed step in the biosynthesis of AMP from IMP. This is Adenylosuccinate synthetase from Staphylococcus saprophyticus subsp. saprophyticus (strain ATCC 15305 / DSM 20229 / NCIMB 8711 / NCTC 7292 / S-41).